The primary structure comprises 685 residues: Stromal interaction molecule 1 (685 aa).

The first 22 residues, M1–S22, serve as a signal peptide directing secretion. At L23–D213 the chain is on the extracellular side. Residues S24–S43 are disordered. Over residues T32–E41 the composition is skewed to low complexity. EF-hand domains are found at residues S64 to N97 and T102 to A126. The Ca(2+) site is built by D76, D78, N80, D82, and E87. N131 and N171 each carry an N-linked (GlcNAc...) asparagine glycan. An SAM domain is found at W132–F200. A helical membrane pass occupies residues F214–N234. The Cytoplasmic portion of the chain corresponds to R235–K685. Positions L248–V442 form a coiled coil. Position 257 is a phosphoserine (S257). Positions P344–V442 are SOAR/CAD. Residues D475–E483 form a contributes to fast Ca(2+)-dependent inactivation of CRAC channels region. Positions M490–V499 are enriched in low complexity. The segment at M490 to R542 is disordered. Phosphothreonine is present on T504. Position 512 is a phosphoserine (S512). Residues D515–R532 are compositionally biased toward basic and acidic residues. At T517 the chain carries Phosphothreonine. A phosphoserine mark is found at S519, S521, S523, S524, S567, S575, S602, S608, S618, S621, and S628. Positions L596–K685 are disordered. A compositionally biased stretch (low complexity) spans S608–S620. The Microtubule tip localization signal motif lies at T642 to P645. A compositionally biased stretch (acidic residues) spans E655 to D666. Phosphoserine is present on S660. At T665 the chain carries Phosphothreonine. Residue S668 is modified to Phosphoserine. Basic residues predominate over residues G670 to K685. The interval K672 to K685 is required for generation of inwardly rectifying CRAC currents.

As to quaternary structure, monomer in the presence of Ca(2+). It oligomerizes in absence of Ca(2+). Forms homooligomers and heterooligomers with STIM2. Interacts with pore-forming subunits of CRAC channels, ORAI1, ORAI2 and ORAI3; this interaction is potentiated upon Ca(2+) store depletion. Interacts (via the transmembrane region and the SOAR/CAD domain) with SPPL3; the interaction promotes the binding of STIM1 to ORAI1. Interacts with ORAI1. Interacts with MAPRE1; probably required for targeting to the growing microtubule plus ends. Interacts with CRACR2A/EFCAB4B; the interaction is direct and takes place in absence of Ca(2+). Forms a complex with CRACR2A/EFCAB4B and ORAI1 at low concentration of Ca(2+), the complex dissociates at elevated Ca(2+) concentrations. Interacts with SARAF, promoting a slow inactivation of STIM1-dependent SOCE activity, possibly by facilitating the deoligomerization of STIM1. Interacts with EFHB; the interaction takes place upon Ca(2+)-store depletion and inhibits the association with SARAF. Interacts with ASPH. Interacts with SLC35G1; intracellular Ca(2+)-dependent. May interact with ATP1A1, ATP2A2, ATP2B1, ATP2B4, KPNB1 and XPO1; through SLC35G1. Interacts with TMEM203. Interacts with STIMATE, promoting STIM1 conformational switch. Interacts with TMEM178A. Interacts with CASQ1 (via C-terminal end and preferentially with the monomeric form); this interaction increases in response to a depletion of intracellular Ca(2+), decreases both STIM1 aggregation and clustering, interaction of STIM1 with ORAI1 and store-operated Ca(2+) entry (SOCE) activity. Interacts with ADCY8. In terms of processing, glycosylation is required for cell surface expression. Post-translationally, phosphorylated predominantly on Ser residues.

Its subcellular location is the cell membrane. The protein resides in the endoplasmic reticulum membrane. It localises to the sarcoplasmic reticulum. It is found in the cytoplasm. The protein localises to the cytoskeleton. In terms of biological role, acts as a Ca(2+) sensor that gates two major inward rectifying Ca(2+) channels at the plasma membrane: Ca(2+) release-activated Ca(2+) (CRAC) channels and arachidonate-regulated Ca(2+)-selective (ARC) channels. Plays a role in mediating store-operated Ca(2+) entry (SOCE), a Ca(2+) influx following depletion of intracellular Ca(2+) stores. Upon Ca(2+) depletion, translocates from the endoplasmic reticulum to the plasma membrane where it activates CRAC channel pore-forming subunits ORA1, ORA2 and ORAI3 to generate sustained and oscillatory Ca(2+) entry. Involved in enamel formation. The chain is Stromal interaction molecule 1 from Rattus norvegicus (Rat).